Consider the following 159-residue polypeptide: 3-hydroxyacyl-[acyl-carrier-protein] dehydratase FabZ (159 aa).

The active site involves His58.

The protein belongs to the thioester dehydratase family. FabZ subfamily.

The protein resides in the cytoplasm. It carries out the reaction a (3R)-hydroxyacyl-[ACP] = a (2E)-enoyl-[ACP] + H2O. Involved in unsaturated fatty acids biosynthesis. Catalyzes the dehydration of short chain beta-hydroxyacyl-ACPs and long chain saturated and unsaturated beta-hydroxyacyl-ACPs. The polypeptide is 3-hydroxyacyl-[acyl-carrier-protein] dehydratase FabZ (Helicobacter pylori (strain Shi470)).